A 294-amino-acid polypeptide reads, in one-letter code: MYQTTIKKSVELVGIGLHKGSAVKLRLEPLESNSGLIFYRSDVDVAIPLLPANVVDTKMATVIGKDGYVISTIEHMLSAIYAYGIDNLKIIVNADEVPVMDGSSASFCMLLDEAGVVQLDVPKKIMRIKKEIIVQEGEKYVKLSPSTDLKYGFTIKFPHPVIQQQEYVLNFTKQNYKDEIARARTFGFLHEVQYLRSKGLALGGSLENAIVLDDKKVLNPEGLRFDDEFVRHKILDAIGDMALIGMNFVGNYEALAGSHDLNHKLTLELLKDAENYEVIELVDEKTKELEKAYA.

Zn(2+) contacts are provided by His75, His232, and Asp236. Residue His259 is the Proton donor of the active site.

The protein belongs to the LpxC family. Zn(2+) serves as cofactor.

It catalyses the reaction a UDP-3-O-[(3R)-3-hydroxyacyl]-N-acetyl-alpha-D-glucosamine + H2O = a UDP-3-O-[(3R)-3-hydroxyacyl]-alpha-D-glucosamine + acetate. It participates in glycolipid biosynthesis; lipid IV(A) biosynthesis; lipid IV(A) from (3R)-3-hydroxytetradecanoyl-[acyl-carrier-protein] and UDP-N-acetyl-alpha-D-glucosamine: step 2/6. Functionally, catalyzes the hydrolysis of UDP-3-O-myristoyl-N-acetylglucosamine to form UDP-3-O-myristoylglucosamine and acetate, the committed step in lipid A biosynthesis. The sequence is that of UDP-3-O-acyl-N-acetylglucosamine deacetylase from Sulfurimonas denitrificans (strain ATCC 33889 / DSM 1251) (Thiomicrospira denitrificans (strain ATCC 33889 / DSM 1251)).